The sequence spans 804 residues: Cas scaffolding protein family member 4 (804 aa).

Positions 11-73 (PKTLLARALY…PANRLQVLRE (63 aa)) constitute an SH3 domain. A phosphoserine mark is found at S200 and S297. Disordered regions lie at residues 369–395 (LERGREAPENSPWISGQTSFLSPDSDR), 607–628 (QRETESYQESSPFDRQPTTEHS), and 642–686 (QQSP…TERK). A compositionally biased stretch (polar residues) spans 380 to 390 (PWISGQTSFLS). Positions 649–664 (EKGKPTMEGKSNRNPD) are enriched in basic and acidic residues.

It belongs to the CAS family. In terms of assembly, interacts (via SH3 domain) with PTK2/FAK1 (via C-terminus). Phosphorylated on tyrosines by SRC.

The protein resides in the cytoplasm. The protein localises to the cytoskeleton. It is found in the cell junction. It localises to the focal adhesion. Docking protein that plays a role in tyrosine kinase-based signaling related to cell adhesion and cell spreading. Regulates PTK2/FAK1 activity, focal adhesion integrity, and cell spreading. The sequence is that of Cas scaffolding protein family member 4 from Mus musculus (Mouse).